The primary structure comprises 250 residues: Solute carrier family 66 member 2 (250 aa).

One can recognise a PQ-loop 1 domain in the interval 14-80 (RMLVSWGASC…HHFESPLLWQ (67 aa)). 6 helical membrane-spanning segments follow: residues 15-35 (MLVSWGASCAMIFGGVVPYIP), 49-69 (FSIYVCLMLLIANILRILFWF), 72-92 (HFESPLLWQSIIMIVTMLLML), 118-138 (FFWHWTRFIDFIQCVLAFTGV), 151-173 (LFVEILGFLAVFTEALLGVPQLY), and 212-232 (FSICGLLQVFVDIAILLQVYL). The 67-residue stretch at 149–215 (SPLFVEILGF…NQAPFQFSIC (67 aa)) folds into the PQ-loop 2 domain.

Its subcellular location is the membrane. The protein is Solute carrier family 66 member 2 (slc66a2) of Xenopus laevis (African clawed frog).